The chain runs to 65 residues: Large ribosomal subunit protein uL29 (65 aa).

The protein belongs to the universal ribosomal protein uL29 family.

In Dehalococcoides mccartyi (strain ATCC BAA-2266 / KCTC 15142 / 195) (Dehalococcoides ethenogenes (strain 195)), this protein is Large ribosomal subunit protein uL29.